A 255-amino-acid polypeptide reads, in one-letter code: U2 small nuclear ribonucleoprotein A' (255 aa).

LRR repeat units follow at residues 20–41, 43–64, 65–86, and 89–110; these read RDRELDLRGYKIPVIENLGATL, QFDAIDFSDNEIRKLDGFPLLR, RLKTLLVNNNRICRIGEGLDQA, and CLTELILTNNSLVELGDLDPLA. An LRRCT domain is found at 123–161; the sequence is NPVTNKKHYRLYVIYKVPQVRVLDFQKVKLKERQEAEKM. The residue at position 172 (lysine 172) is an N6-acetyllysine; alternate. A Glycyl lysine isopeptide (Lys-Gly) (interchain with G-Cter in SUMO2); alternate cross-link involves residue lysine 172. Residues serine 178 and serine 197 each carry the phosphoserine modification. The interval 179-199 is disordered; the sequence is KTFNPGAGLPTDKKKGGPSAG. Lysine 221 is covalently cross-linked (Glycyl lysine isopeptide (Lys-Gly) (interchain with G-Cter in SUMO2)). Residues 222–255 form a disordered region; sequence GLLQSGQIPGRERRSGPSDEGEEEIEDDTVTNGS. Phosphoserine occurs at positions 236 and 255. Residues 240 to 255 show a composition bias toward acidic residues; that stretch reads DEGEEEIEDDTVTNGS.

This sequence belongs to the U2 small nuclear ribonucleoprotein A family. Identified in the spliceosome B complex. Identified in the spliceosome C complex. Found in a pre-mRNA splicing complex with SFRS4, SFRS5, SNRNP70, SNRPA1, SRRM1 and SRRM2. Found in a pre-mRNA exonic splicing enhancer (ESE) complex with SNRNP70, SNRPA1, SRRM1 and TRA2B. Contributes to the binding of stem loop IV of U2 snRNA with SNRPB2.

It localises to the nucleus. Its function is as follows. Involved in pre-mRNA splicing as component of the spliceosome. Associated with sn-RNP U2, where it contributes to the binding of stem loop IV of U2 snRNA. This Mus musculus (Mouse) protein is U2 small nuclear ribonucleoprotein A' (Snrpa1).